The sequence spans 507 residues: Cobyric acid synthase (507 aa).

Positions 259-456 (EIQIAVIKLP…LHGIFDNGTW (198 aa)) constitute a GATase cobBQ-type domain. C340 functions as the Nucleophile in the catalytic mechanism. H448 is a catalytic residue.

Belongs to the CobB/CobQ family. CobQ subfamily.

The protein operates within cofactor biosynthesis; adenosylcobalamin biosynthesis. Functionally, catalyzes amidations at positions B, D, E, and G on adenosylcobyrinic A,C-diamide. NH(2) groups are provided by glutamine, and one molecule of ATP is hydrogenolyzed for each amidation. The chain is Cobyric acid synthase from Prochlorococcus marinus (strain SARG / CCMP1375 / SS120).